The sequence spans 396 residues: NDP-glycosyltransferase YjiC (396 aa).

UDP-binding positions include Asn18, Thr234, Val283, His298, and 302–306 (NSTME).

It belongs to the UDP-glycosyltransferase family.

It catalyses the reaction an NDP-glycose + an acceptor = a glycosylated acceptor + NDP.. Its function is as follows. Glycosyltransferase that can glycosylate a wide range of substrates, including various flavonoids (flavones, flavonols, flavanones, flavanols, chalcones), isoflavonoids and stilbenes, to produce multiple glycosylated products. It can accept diverse nucleotide diphosphate-D/L-sugars as donors, including ADP-, GDP-, CDP-, TDP- or UDP-alpha-D-glucose, and catalyzes O-, N-, or S-glycosylation. In vitro, catalyzes the glycosylation of, among others, apigenin, 3-hydroxyflavone, phloretin or resveratrol, resulting in multiple glucosylated products, along with mono-, di-, tri- and tetraglucosides. Can also catalyze the glycosylation of the macrolide epothilone A with diverse NDP-D/L-sugars, forming different epothilone A glycoside derivatives. The polypeptide is NDP-glycosyltransferase YjiC (Bacillus licheniformis (strain ATCC 14580 / DSM 13 / JCM 2505 / CCUG 7422 / NBRC 12200 / NCIMB 9375 / NCTC 10341 / NRRL NRS-1264 / Gibson 46)).